The sequence spans 151 residues: Arginine repressor (151 aa).

The protein belongs to the ArgR family.

The protein localises to the cytoplasm. Its pathway is amino-acid biosynthesis; L-arginine biosynthesis [regulation]. Regulates arginine biosynthesis genes. This Pelotomaculum thermopropionicum (strain DSM 13744 / JCM 10971 / SI) protein is Arginine repressor.